The primary structure comprises 330 residues: DNA primase small subunit PriS (330 aa).

Residues Asp-101 and Asp-103 contribute to the active site. Zn(2+) contacts are provided by Cys-116, Cys-119, Cys-128, and Asp-131. Asp-235 is a catalytic residue.

It belongs to the eukaryotic-type primase small subunit family. In terms of assembly, heterodimer of a small subunit (PriS) and a large subunit (PriL). Mg(2+) is required as a cofactor. The cofactor is Mn(2+).

Its function is as follows. Catalytic subunit of DNA primase, an RNA polymerase that catalyzes the synthesis of short RNA molecules used as primers for DNA polymerase during DNA replication. The small subunit contains the primase catalytic core and has DNA synthesis activity on its own. Binding to the large subunit stabilizes and modulates the activity, increasing the rate of DNA synthesis while decreasing the length of the DNA fragments, and conferring RNA synthesis capability. The DNA polymerase activity may enable DNA primase to also catalyze primer extension after primer synthesis. May also play a role in DNA repair. The chain is DNA primase small subunit PriS from Saccharolobus islandicus (strain M.16.27) (Sulfolobus islandicus).